A 438-amino-acid polypeptide reads, in one-letter code: Putative metabolite transport protein HI_0281 (438 aa).

The Cytoplasmic portion of the chain corresponds to 1 to 17 (MSTQLRNNPMKVALASM). A helical membrane pass occupies residues 18–38 (VGTAIEFFDYYIYAAAAVLVF). Over 39–52 (NTQFFHSDDPLSND) the chain is Periplasmic. A helical membrane pass occupies residues 53-73 (LLSLSTLALAFFARPIGSALF). At 74-85 (GHFGDKIGRKKT) the chain is on the cytoplasmic side. A helical transmembrane segment spans residues 86-106 (LVASLVLMGGSTVVIGLLPNY). Topologically, residues 107 to 115 (AQIGIWAPI) are periplasmic. A helical membrane pass occupies residues 116-136 (LLCVCRVGQGIGLGGEWGGAA). The Cytoplasmic portion of the chain corresponds to 137–156 (LVATENAPEGKRAWYGTFPQ). A helical membrane pass occupies residues 157–177 (LGAPIGLFVANGTFFLVSYLL). Residues 178-181 (GHNA) lie on the Periplasmic side of the membrane. Residues 182–202 (LVEWAWRIPFVSSILLVAVGL) traverse the membrane as a helical segment. Residues 203–239 (YVRLTLHESHVFVEAEQKGKKLNAPVSVVFTKHLKPM) lie on the Cytoplasmic side of the membrane. The helical transmembrane segment at 240–260 (VIGTFIMVATYSLFYIMTAFA) threads the bilayer. Over 261–286 (QAYSRTAPKLSEAGYALGLGIPANTF) the chain is Periplasmic. A helical transmembrane segment spans residues 287–307 (TGLLLISAIVFGIFISISGFY). The Cytoplasmic portion of the chain corresponds to 308-314 (ADKIGRR). A helical transmembrane segment spans residues 315-336 (KWLIWVTIAIGVLGLAMPLFLE). Residues 337 to 342 (NGTPVS) lie on the Periplasmic side of the membrane. The chain crosses the membrane as a helical span at residues 343–363 (VFAFLVIGMAIMGMTFGPMAA). Over 364 to 377 (LLPELFPTEVRYSG) the chain is Cytoplasmic. A helical transmembrane segment spans residues 378 to 398 (ASLAYNLASIIGATIAAMISL). Residues 399–405 (KINASFG) lie on the Periplasmic side of the membrane. The chain crosses the membrane as a helical span at residues 406 to 426 (VMGVGIYLAINALMTFLALLA). At 427 to 438 (SKETKNVDLTEI) the chain is on the cytoplasmic side.

This sequence belongs to the major facilitator superfamily. Sugar transporter (TC 2.A.1.1) family.

It localises to the cell inner membrane. The protein is Putative metabolite transport protein HI_0281 of Haemophilus influenzae (strain ATCC 51907 / DSM 11121 / KW20 / Rd).